The chain runs to 622 residues: Mitochondrial Rho GTPase 2 (622 aa).

At 1–596 (MRRDVRILLL…ELHPTPFWLR (596 aa)) the chain is on the cytoplasmic side. Residues 2–168 (RRDVRILLLG…FYYAQKAVLH (167 aa)) form the Miro 1 domain. Residues G16, K17, T18, and S19 each coordinate GTP. Residue T18 participates in Mg(2+) binding. D57 contributes to the Mg(2+) binding site. S59 is a GTP binding site. K96 is covalently cross-linked (Glycyl lysine isopeptide (Lys-Gly) (interchain with G-Cter in ubiquitin)). GTP-binding residues include N118, K119, D121, A149, and K150. K119 participates in a covalent cross-link: Glycyl lysine isopeptide (Lys-Gly) (interchain with G-Cter in ubiquitin). K164 is covalently cross-linked (Glycyl lysine isopeptide (Lys-Gly) (interchain with G-Cter in ubiquitin)). 2 consecutive EF-hand domains span residues 184–219 (ACAQALTRIFRLSDQDLDHALSDKELNAFQKSCFGH) and 304–339 (RGYQFVQRVFEKHDQDHDGVLSPTELESLFSVFSVA). Ca(2+) contacts are provided by D197, D199, D201, E208, D317, D319, D321, and E328. The Miro 2 domain maps to 415–580 (RSVLMCKVLG…FTQLATMATF (166 aa)). Positions 427, 429, 430, 431, and 432 each coordinate GTP. Residue S431 participates in Mg(2+) binding. E475 is a Mg(2+) binding site. GTP-binding residues include K529, D531, and C560. The helical; Anchor for type IV membrane protein transmembrane segment at 597–619 (GVLVAVGTAVAAVLSFSLYRVLV) threads the bilayer. The Mitochondrial intermembrane portion of the chain corresponds to 620–622 (KSR).

This sequence belongs to the mitochondrial Rho GTPase family. As to quaternary structure, homodimer. Interacts with the kinesin-binding proteins TRAK1/OIP106 and TRAK2/GRIF1, forming a link between mitochondria and the trafficking apparatus of the microtubules. Interacts with ARMCX3. Found in a complex with KIF5B, OGT, RHOT1 and TRAK1. Ubiquitinated by PRKN in a PINK1-dependent manner, leading to its degradation.

It is found in the mitochondrion outer membrane. The enzyme catalyses GTP + H2O = GDP + phosphate + H(+). It carries out the reaction ATP + H2O = ADP + phosphate + H(+). It catalyses the reaction UTP + H2O = UDP + phosphate + H(+). Atypical mitochondrial nucleoside-triphosphatase (NTPase) involved in mitochondrial trafficking. Probably involved in control of anterograde transport of mitochondria and their subcellular distribution. Can hydrolyze GTP, ATP and UTP. The protein is Mitochondrial Rho GTPase 2 (Rhot2) of Rattus norvegicus (Rat).